A 546-amino-acid chain; its full sequence is Chaperonin GroEL (546 aa).

Residues 30–33 (TLGP), lysine 51, 87–91 (DGTTT), glycine 415, 479–481 (NAA), and aspartate 495 each bind ATP. A disordered region spans residues 527 to 546 (DESAAPAMPGGMGGMGDMGM). A compositionally biased stretch (gly residues) spans 536–546 (GGMGGMGDMGM).

The protein belongs to the chaperonin (HSP60) family. In terms of assembly, forms a cylinder of 14 subunits composed of two heptameric rings stacked back-to-back. Interacts with the co-chaperonin GroES.

It localises to the cytoplasm. The catalysed reaction is ATP + H2O + a folded polypeptide = ADP + phosphate + an unfolded polypeptide.. Together with its co-chaperonin GroES, plays an essential role in assisting protein folding. The GroEL-GroES system forms a nano-cage that allows encapsulation of the non-native substrate proteins and provides a physical environment optimized to promote and accelerate protein folding. This is Chaperonin GroEL from Acidovorax ebreus (strain TPSY) (Diaphorobacter sp. (strain TPSY)).